A 143-amino-acid polypeptide reads, in one-letter code: NADH-quinone oxidoreductase subunit A (143 aa).

Helical transmembrane passes span 12–32, 61–81, and 90–110; these read YIVGSVFLCVFMLLCGYFLGG, FYLIAMIFVIFDVEGIYLYIW, and WIGFIEVCIFVFILLISLIYA.

The protein belongs to the complex I subunit 3 family. As to quaternary structure, NDH-1 is composed of 13 different subunits. Subunits NuoA, H, J, K, L, M, N constitute the membrane sector of the complex.

Its subcellular location is the cell inner membrane. It catalyses the reaction a quinone + NADH + 5 H(+)(in) = a quinol + NAD(+) + 4 H(+)(out). NDH-1 shuttles electrons from NADH, via FMN and iron-sulfur (Fe-S) centers, to quinones in the respiratory chain. The immediate electron acceptor for the enzyme in this species is believed to be ubiquinone. Couples the redox reaction to proton translocation (for every two electrons transferred, four hydrogen ions are translocated across the cytoplasmic membrane), and thus conserves the redox energy in a proton gradient. This is NADH-quinone oxidoreductase subunit A from Blochmanniella floridana.